The following is a 149-amino-acid chain: 3-hydroxyacyl-[acyl-carrier-protein] dehydratase FabZ (149 aa).

The active site involves histidine 49.

Belongs to the thioester dehydratase family. FabZ subfamily.

It is found in the cytoplasm. The enzyme catalyses a (3R)-hydroxyacyl-[ACP] = a (2E)-enoyl-[ACP] + H2O. Involved in unsaturated fatty acids biosynthesis. Catalyzes the dehydration of short chain beta-hydroxyacyl-ACPs and long chain saturated and unsaturated beta-hydroxyacyl-ACPs. This Sulfurimonas denitrificans (strain ATCC 33889 / DSM 1251) (Thiomicrospira denitrificans (strain ATCC 33889 / DSM 1251)) protein is 3-hydroxyacyl-[acyl-carrier-protein] dehydratase FabZ.